Here is a 382-residue protein sequence, read N- to C-terminus: Anhydro-N-acetylmuramic acid kinase (382 aa).

9–16 (GTSLDGID) is an ATP binding site.

Belongs to the anhydro-N-acetylmuramic acid kinase family.

The enzyme catalyses 1,6-anhydro-N-acetyl-beta-muramate + ATP + H2O = N-acetyl-D-muramate 6-phosphate + ADP + H(+). Its pathway is amino-sugar metabolism; 1,6-anhydro-N-acetylmuramate degradation. It functions in the pathway cell wall biogenesis; peptidoglycan recycling. Catalyzes the specific phosphorylation of 1,6-anhydro-N-acetylmuramic acid (anhMurNAc) with the simultaneous cleavage of the 1,6-anhydro ring, generating MurNAc-6-P. Is required for the utilization of anhMurNAc either imported from the medium or derived from its own cell wall murein, and thus plays a role in cell wall recycling. The chain is Anhydro-N-acetylmuramic acid kinase from Bacillus cereus (strain ZK / E33L).